The chain runs to 145 residues: Cuticle protein 5 (145 aa).

The protein is Cuticle protein 5 of Blaberus craniifer (Death's head cockroach).